We begin with the raw amino-acid sequence, 615 residues long: Chaperone protein HtpG (615 aa).

Positions 1–335 are a; substrate-binding; that stretch reads MSAEKQTHGF…APDLPLNVSR (335 aa). The segment at 336–541 is b; the sequence is ELLQDYGPVQ…EDQLGPQMRR (206 aa). Positions 542 to 615 are c; it reads MLEAAGQPVP…RMQALLSQSV (74 aa).

The protein belongs to the heat shock protein 90 family. Homodimer.

It is found in the cytoplasm. Molecular chaperone. Has ATPase activity. This is Chaperone protein HtpG from Alcanivorax borkumensis (strain ATCC 700651 / DSM 11573 / NCIMB 13689 / SK2).